The sequence spans 85 residues: Large ribosomal subunit protein bL27 (85 aa).

The tract at residues 1-20 (MAHKKAGGSTRNGRDSEAKR) is disordered.

It belongs to the bacterial ribosomal protein bL27 family.

The chain is Large ribosomal subunit protein bL27 from Cronobacter sakazakii (strain ATCC BAA-894) (Enterobacter sakazakii).